Consider the following 233-residue polypeptide: Ribosomal RNA large subunit methyltransferase E (233 aa).

S-adenosyl-L-methionine contacts are provided by Gly80, Trp82, Asp108, Asp124, and Asp148. Lys188 acts as the Proton acceptor in catalysis.

It belongs to the class I-like SAM-binding methyltransferase superfamily. RNA methyltransferase RlmE family.

The protein localises to the cytoplasm. The catalysed reaction is uridine(2552) in 23S rRNA + S-adenosyl-L-methionine = 2'-O-methyluridine(2552) in 23S rRNA + S-adenosyl-L-homocysteine + H(+). Its function is as follows. Specifically methylates the uridine in position 2552 of 23S rRNA at the 2'-O position of the ribose in the fully assembled 50S ribosomal subunit. The sequence is that of Ribosomal RNA large subunit methyltransferase E from Ruegeria pomeroyi (strain ATCC 700808 / DSM 15171 / DSS-3) (Silicibacter pomeroyi).